We begin with the raw amino-acid sequence, 495 residues long: Cytochrome P450 monooxygenase 88 (495 aa).

Residues 2–22 (FLQIVTSVLATGLLYALISVL) form a helical membrane-spanning segment. 2 N-linked (GlcNAc...) asparagine glycosylation sites follow: asparagine 25 and asparagine 198. Cysteine 428 is a binding site for heme.

This sequence belongs to the cytochrome P450 family. The cofactor is heme.

The protein resides in the membrane. It functions in the pathway secondary metabolite biosynthesis. In terms of biological role, cytochrome P450 monooxygenase that is able to use 4-ethoxybenzoic acid as a substrate for oxidation. In Postia placenta (strain ATCC 44394 / Madison 698-R) (Brown rot fungus), this protein is Cytochrome P450 monooxygenase 88.